A 100-amino-acid chain; its full sequence is Pancreatic polypeptide prohormone (100 aa).

The first 29 residues, 1–29 (MAVAYCCLSLFLVSTWVALLLQPLQGTWG), serve as a signal peptide directing secretion. Tyr-65 bears the Tyrosine amide mark.

The protein belongs to the NPY family. Post-translationally, no icosapeptide-like peptide is cleaved from the C-terminal.

The protein resides in the secreted. Functionally, hormone secreted by pancreatic cells that acts as a regulator of pancreatic and gastrointestinal functions probably by signaling through the G protein-coupled receptor NPY4R2. This Mus musculus (Mouse) protein is Pancreatic polypeptide prohormone (Ppy).